The primary structure comprises 572 residues: Phosphoenolpyruvate-protein phosphotransferase (572 aa).

Residue His-191 is the Tele-phosphohistidine intermediate of the active site. Residues Arg-298 and Arg-334 each contribute to the phosphoenolpyruvate site. The Mg(2+) site is built by Glu-433 and Asp-457. Phosphoenolpyruvate is bound by residues 456–457 (ND) and Arg-467. Cys-504 (proton donor) is an active-site residue.

It belongs to the PEP-utilizing enzyme family. As to quaternary structure, homodimer. Mg(2+) serves as cofactor.

It localises to the cytoplasm. It carries out the reaction L-histidyl-[protein] + phosphoenolpyruvate = N(pros)-phospho-L-histidyl-[protein] + pyruvate. Its function is as follows. General (non sugar-specific) component of the phosphoenolpyruvate-dependent sugar phosphotransferase system (sugar PTS). This major carbohydrate active-transport system catalyzes the phosphorylation of incoming sugar substrates concomitantly with their translocation across the cell membrane. Enzyme I transfers the phosphoryl group from phosphoenolpyruvate (PEP) to the phosphoryl carrier protein (HPr). The chain is Phosphoenolpyruvate-protein phosphotransferase from Staphylococcus aureus (strain MSSA476).